The chain runs to 866 residues: Rifampicin phosphotransferase (866 aa).

An ATP-binding region spans residues 1-313 (MSSLVLGLHE…FYIVQSRPIT (313 aa)). Residues lysine 22, arginine 116, glycine 131, threonine 135, glutamine 182, glutamate 296, glutamine 308, and arginine 310 each coordinate ATP. The rifampicin-binding stretch occupies residues 326 to 754 (NHVYISVGHQ…TSDGEIVTGE (429 aa)). The disordered stretch occupies residues 410–429 (IPNDKTAPNPSRGNADMPAQ). The interval 767–865 (GLPVSSGVIE…VHGTEGYIEI (99 aa)) is swivel phosphohistidine. Residue histidine 825 is the Tele-phosphohistidine intermediate of the active site.

This sequence belongs to the rifampicin phosphotransferase family.

The enzyme catalyses rifampicin + ATP + H2O = 21-phosphorifampicin + AMP + phosphate + 2 H(+). Catalyzes the phosphorylation of rifampicin, also known as rifampin (RIF), leading to its inactivation. The protein is Rifampicin phosphotransferase of Bacillus subtilis (strain 168).